Reading from the N-terminus, the 140-residue chain is Large ribosomal subunit protein uL11 (140 aa).

The protein belongs to the universal ribosomal protein uL11 family. Part of the ribosomal stalk of the 50S ribosomal subunit. Interacts with L10 and the large rRNA to form the base of the stalk. L10 forms an elongated spine to which L12 dimers bind in a sequential fashion forming a multimeric L10(L12)X complex. Post-translationally, one or more lysine residues are methylated.

Functionally, forms part of the ribosomal stalk which helps the ribosome interact with GTP-bound translation factors. This is Large ribosomal subunit protein uL11 from Syntrophobacter fumaroxidans (strain DSM 10017 / MPOB).